The following is a 420-amino-acid chain: Gamma-glutamyl phosphate reductase (420 aa).

The protein belongs to the gamma-glutamyl phosphate reductase family.

Its subcellular location is the cytoplasm. It catalyses the reaction L-glutamate 5-semialdehyde + phosphate + NADP(+) = L-glutamyl 5-phosphate + NADPH + H(+). It functions in the pathway amino-acid biosynthesis; L-proline biosynthesis; L-glutamate 5-semialdehyde from L-glutamate: step 2/2. Its function is as follows. Catalyzes the NADPH-dependent reduction of L-glutamate 5-phosphate into L-glutamate 5-semialdehyde and phosphate. The product spontaneously undergoes cyclization to form 1-pyrroline-5-carboxylate. This Laribacter hongkongensis (strain HLHK9) protein is Gamma-glutamyl phosphate reductase.